Reading from the N-terminus, the 212-residue chain is NAD(P)H-hydrate epimerase (212 aa).

The region spanning 11 to 212 (MRHYDFYTIN…ANDMGTYAVD (202 aa)) is the YjeF N-terminal domain. 60–64 (NNGGD) contacts (6S)-NADPHX. 2 residues coordinate K(+): asparagine 61 and aspartate 123. (6S)-NADPHX-binding positions include 127–133 (GIGIDRA), tyrosine 138, and aspartate 156. K(+) is bound at residue serine 159.

This sequence belongs to the NnrE/AIBP family. K(+) is required as a cofactor.

It carries out the reaction (6R)-NADHX = (6S)-NADHX. It catalyses the reaction (6R)-NADPHX = (6S)-NADPHX. Catalyzes the epimerization of the S- and R-forms of NAD(P)HX, a damaged form of NAD(P)H that is a result of enzymatic or heat-dependent hydration. This is a prerequisite for the S-specific NAD(P)H-hydrate dehydratase to allow the repair of both epimers of NAD(P)HX. The polypeptide is NAD(P)H-hydrate epimerase (Limosilactobacillus reuteri (strain DSM 20016) (Lactobacillus reuteri)).